Consider the following 47-residue polypeptide: Putative glycosylation-dependent cell adhesion molecule 1 (47 aa).

An N-terminal signal peptide occupies residues 1 to 18; it reads MKFFMVLLPASLASTSLA.

It belongs to the PP3/GlyCAM-1 family. Expressed in cells harvested from milk of lactating women. Not found in other tissues.

The protein is Putative glycosylation-dependent cell adhesion molecule 1 (GLYCAM1) of Homo sapiens (Human).